Reading from the N-terminus, the 160-residue chain is MRIGLFAVGRLKSGPEKDLVARYLDRFAKAGSAVGLEFTRVAEVGESRASNAETRKREEAAMLLKSLAEGSVLILLDERGKALDSEAFAKLLGGYRDQGKRELTIAIGGADGLDPSLYDRADATLCLGKMTWPHQLVRTLIAEQLYRAVTILSGHPYHRV.

S-adenosyl-L-methionine-binding positions include Leu76, Gly108, and 127–132 (LGKMTW).

This sequence belongs to the RNA methyltransferase RlmH family. As to quaternary structure, homodimer.

It is found in the cytoplasm. It catalyses the reaction pseudouridine(1915) in 23S rRNA + S-adenosyl-L-methionine = N(3)-methylpseudouridine(1915) in 23S rRNA + S-adenosyl-L-homocysteine + H(+). Functionally, specifically methylates the pseudouridine at position 1915 (m3Psi1915) in 23S rRNA. The polypeptide is Ribosomal RNA large subunit methyltransferase H (Rhizobium etli (strain ATCC 51251 / DSM 11541 / JCM 21823 / NBRC 15573 / CFN 42)).